A 394-amino-acid chain; its full sequence is LL-diaminopimelate aminotransferase (394 aa).

Substrate contacts are provided by Y14 and G41. Pyridoxal 5'-phosphate contacts are provided by residues Y71, 104 to 105 (AK), Y128, N174, Y205, and 233 to 235 (SFS). The substrate site is built by K105, Y128, and N174. K236 is subject to N6-(pyridoxal phosphate)lysine. Residues R244 and N275 each contribute to the pyridoxal 5'-phosphate site. N275 and R369 together coordinate substrate.

It belongs to the class-I pyridoxal-phosphate-dependent aminotransferase family. LL-diaminopimelate aminotransferase subfamily. As to quaternary structure, homodimer. Pyridoxal 5'-phosphate is required as a cofactor.

The enzyme catalyses (2S,6S)-2,6-diaminopimelate + 2-oxoglutarate = (S)-2,3,4,5-tetrahydrodipicolinate + L-glutamate + H2O + H(+). It functions in the pathway amino-acid biosynthesis; L-lysine biosynthesis via DAP pathway; LL-2,6-diaminopimelate from (S)-tetrahydrodipicolinate (aminotransferase route): step 1/1. Functionally, involved in the synthesis of meso-diaminopimelate (m-DAP or DL-DAP), required for both lysine and peptidoglycan biosynthesis. Catalyzes the direct conversion of tetrahydrodipicolinate to LL-diaminopimelate. Is also able to use meso-diaminopimelate, cystathionine, lysine or ornithine as substrates. This is LL-diaminopimelate aminotransferase from Chlamydia trachomatis serovar D (strain ATCC VR-885 / DSM 19411 / UW-3/Cx).